A 264-amino-acid chain; its full sequence is uncharacterized protein (264 aa).

The helical transmembrane segment at 7-27 (LTLGICLVLLIILIVGYVIMT) threads the bilayer.

This sequence belongs to the staphylococcal tandem lipoprotein family.

The protein resides in the cell membrane. This is an uncharacterized protein from Staphylococcus aureus (strain MRSA252).